A 299-amino-acid polypeptide reads, in one-letter code: Taste receptor type 2 member 19 (299 aa).

Met1 is a topological domain (extracellular). A helical membrane pass occupies residues 2–22; that stretch reads MCFLLIILSILVVFAFVLGNF. The Cytoplasmic portion of the chain corresponds to 23–55; the sequence is SNGFIALVNVIDWVNTRKISSADQILTALVVSR. A helical membrane pass occupies residues 56–76; that stretch reads IGLLWVMLFLWYATVFNSALY. Residues 77-87 are Extracellular-facing; the sequence is GLEVRIVASNA. A helical transmembrane segment spans residues 88 to 108; the sequence is WAVMNHFSIWLAASLSIFCLL. Over 109-127 the chain is Cytoplasmic; sequence KIANFSNLIFLHLKKRIKS. A helical membrane pass occupies residues 128–148; that stretch reads VVLVILLGPLVFLICNLAVIT. Topologically, residues 149–181 are extracellular; that stretch reads MDERVWTKEYEGNVTWKIKLRNAIQLSSLTVTT. Residue Asn161 is glycosylated (N-linked (GlcNAc...) asparagine). The helical transmembrane segment at 182–202 threads the bilayer; that stretch reads LANLIPFTLSLICFLLLICSL. Topologically, residues 203–226 are cytoplasmic; the sequence is CKHLKKMRLHSKGSQDPSTKVHIK. Residues 227–247 traverse the membrane as a helical segment; it reads ALQTVTSFLMLFAIYFLCIIT. Over 248 to 259 the chain is Extracellular; sequence STWNLRTQQSKL. Residues 260–280 form a helical membrane-spanning segment; the sequence is VLLLCQTVAIMYPSFHSFILI. The Cytoplasmic portion of the chain corresponds to 281-299; the sequence is MGSRKLKQTFLSVLWQMTR.

Belongs to the G-protein coupled receptor T2R family.

It is found in the membrane. Functionally, receptor that may play a role in the perception of bitterness and is gustducin-linked. May play a role in sensing the chemical composition of the gastrointestinal content. The activity of this receptor may stimulate alpha gustducin, mediate PLC-beta-2 activation and lead to the gating of TRPM5. The protein is Taste receptor type 2 member 19 (TAS2R19) of Pan paniscus (Pygmy chimpanzee).